We begin with the raw amino-acid sequence, 530 residues long: Plexin domain-containing protein 2 (530 aa).

The N-terminal stretch at 1–30 (MARFRRADLAAAGVMLLCHFLTDRFQFAHG) is a signal peptide. At 31–455 (EPGHHTNDWI…AEKKGGTLHA (425 aa)) the chain is on the extracellular side. N-linked (GlcNAc...) asparagine glycans are attached at residues Asn103 and Asn160. In terms of domain architecture, PSI spans 327 to 372 (TCLQFNGCGPCVSSQIGFNCSWCSKLQRCSSGFDRHRQDWVDSGCP). Residues 378–387 (KEKMCEKTEP) are compositionally biased toward basic and acidic residues. The disordered stretch occupies residues 378 to 399 (KEKMCEKTEPGETSQTTTTSHT). Low complexity predominate over residues 390–399 (TSQTTTTSHT). Residues 456 to 476 (GLIVGILILVLIIAAAILVTV) traverse the membrane as a helical segment. The Cytoplasmic segment spans residues 477 to 530 (YMYHHPTSAASIFFIERRPSRWPAMKFRRGSGHPAYAEVEPVGEKEGFIVSEQC). Residue Ser507 is modified to Phosphoserine.

This sequence belongs to the plexin family. In terms of assembly, interacts with CTTN. As to expression, expressed in tumor endothelium and in vessels of some normal tissues, such as the muscle and lung.

The protein resides in the membrane. Functionally, may play a role in tumor angiogenesis. This is Plexin domain-containing protein 2 (Plxdc2) from Mus musculus (Mouse).